A 201-amino-acid polypeptide reads, in one-letter code: 3-isopropylmalate dehydratase small subunit (201 aa).

This sequence belongs to the LeuD family. LeuD type 1 subfamily. Heterodimer of LeuC and LeuD.

The enzyme catalyses (2R,3S)-3-isopropylmalate = (2S)-2-isopropylmalate. It participates in amino-acid biosynthesis; L-leucine biosynthesis; L-leucine from 3-methyl-2-oxobutanoate: step 2/4. Catalyzes the isomerization between 2-isopropylmalate and 3-isopropylmalate, via the formation of 2-isopropylmaleate. This Azorhizobium caulinodans (strain ATCC 43989 / DSM 5975 / JCM 20966 / LMG 6465 / NBRC 14845 / NCIMB 13405 / ORS 571) protein is 3-isopropylmalate dehydratase small subunit.